Here is a 669-residue protein sequence, read N- to C-terminus: Epithelial sodium channel subunit alpha (669 aa).

A disordered region spans residues 1–43 (MEGNKLEEQDSSPPQSTPGLMKGNKREEQGLGPEPAAPQQPTA). Topologically, residues 1-85 (MEGNKLEEQD…CSQHNRMKTA (85 aa)) are cytoplasmic. Positions 33–42 (PEPAAPQQPT) are enriched in low complexity. Residues 86 to 106 (FWAVLWLCTFGMMYWQFGLLF) traverse the membrane as a helical segment. Residues 107–562 (GEYFSYPVSL…SQWSLWFGSS (456 aa)) lie on the Extracellular side of the membrane. Cystine bridges form between Cys133/Cys305, Cys229/Cys236, Cys282/Cys289, Cys394/Cys479, Cys416/Cys456, Cys416/Cys475, Cys420/Cys471, Cys429/Cys456, Cys429/Cys479, and Cys431/Cys445. Positions 175 to 243 (RSRRDLRGTL…SDCFYQTYSS (69 aa)) are gating release of inhibition by proteolysis (GRIP); protease-sensitive region that is responsible for the proteolytic activation of the channel. A helical membrane pass occupies residues 563 to 583 (VLSVVEMAELVFDLLVIMFLM). Topologically, residues 584–669 (LLRRFRSRYW…SSSTCPLGGP (86 aa)) are cytoplasmic. The disordered stretch occupies residues 620–669 (HPMSLSLSQPGPAPSPALTAPPPAYATLGPRPSPGGSAGASSSTCPLGGP). Residues 630–643 (GPAPSPALTAPPPA) are compositionally biased toward pro residues. The PY motif; recruits WW domain-containing proteins and is thereby required for ubiquitination and inhibition of the channel by NEDD4 and NEDD4L signature appears at 640–644 (PPPAY).

Belongs to the amiloride-sensitive sodium channel (TC 1.A.6) family. SCNN1A subfamily. Heterotrimer; containing an alpha/SCNN1A, a beta/SCNN1B and a gamma/SCNN1G subunit. Interacts with WWP1 (via WW domains). Interacts with WWP2 (via WW domains); inhibits the channel. Interacts with BPIFA1; the interaction is indirect via SCNN1B and inhibits the proteolytic processing of SCNN1A and SCNN1G and the activation of ENaC. Interacts with the full-length immature form of PCSK9 (pro-PCSK9); inhibits ENaC by promoting its proteasomal degradation. Ubiquitinated. Can be ubiquitinated at multiple sites and undergo monoubiquitination and polyubiquitination. Ubiquitination by NEDD4 or NEDD4L inhibits the ENaC channel through endocytosis, intracellular retention and degradation of its individual subunits. In terms of processing, ENaC is activated through the proteolytic maturation of its subunits. Furin cleaves the SCNN1A subunit, which results in a stepwise increase in the open probability of the channel due to the release of an inhibitory tract. BPIFA1, which is recruited by the SCNN1B subunit, prevents the proteolytic activation of ENaC. Post-translationally, N-glycosylated. Expressed in the female reproductive tract, from the fimbrial end of the fallopian tube to the endometrium (at protein level). Expressed in kidney (at protein level). In the respiratory tract, expressed in the bronchial epithelium (at protein level). Highly expressed in lung. Detected at intermediate levels in pancreas and liver, and at low levels in heart and placenta. in skin, expressed in keratinocytes, melanocytes and Merkel cells of the epidermal sub-layers, stratum basale, stratum spinosum and stratum granulosum (at protein level). Expressed in the outer root sheath of the hair follicles (at protein level). Detected in both peripheral and central cells of the sebaceous gland (at protein level). Expressed by eccrine sweat glands (at protein level). In skin, also expressed by arrector pili muscle cells and intradermal adipocytes. Isoform 1 and isoform 2 predominate in all tissues. As to expression, detected in lung and heart.

It localises to the apical cell membrane. The protein localises to the cell projection. It is found in the cilium. Its subcellular location is the cytoplasmic granule. The protein resides in the cytoplasm. It localises to the cytoplasmic vesicle. The protein localises to the secretory vesicle. It is found in the acrosome. Its subcellular location is the flagellum. It carries out the reaction Na(+)(in) = Na(+)(out). With respect to regulation, originally identified and characterized by its inhibition by the diuretic drug amiloride. Inhibited by phenamil. Functionally, this is one of the three pore-forming subunits of the heterotrimeric epithelial sodium channel (ENaC), a critical regulator of sodium balance and fluid homeostasis. ENaC operates in epithelial tissues, where it mediates the electrodiffusion of sodium ions from extracellular fluid through the apical membrane of cells, with water following osmotically. It plays a key role in maintaining sodium homeostasis through electrogenic sodium reabsorption in the kidneys. Additionally, ENaC is essential for airway surface liquid homeostasis, which is crucial for proper mucus clearance. Its function is as follows. Not functional. The protein is Epithelial sodium channel subunit alpha of Homo sapiens (Human).